The chain runs to 230 residues: MRKLSRRQKENRAKTKDSIYSNLEDAITILQETATAKFTETVELHANLNIDPKYADQQLRTTVTLPHGIGKTINIAVLTNDSNFTEAREAGADRVGSDDLIEEISQGNISFDLLIATPDMMPKLAKLGRVLGPKGLMPSPKSGTVSTTLTATLSEFKKGKFEYKADKAGVVHVSFGKSNFTHSQLMENLTALYKSIEQNRPSGVKGKYFKSLFICTTMGPSIQLDLNIFL.

Belongs to the universal ribosomal protein uL1 family. As to quaternary structure, part of the 50S ribosomal subunit.

The protein resides in the plastid. The protein localises to the chloroplast. In terms of biological role, binds directly to 23S rRNA. Might be involved in E site tRNA release (Potential). This chain is Large ribosomal subunit protein uL1c (rpl1), found in Trieres chinensis (Marine centric diatom).